Here is a 216-residue protein sequence, read N- to C-terminus: Protein Nef (216 aa).

Positions methionine 1 to glutamine 32 are disordered. Residue glycine 2 is the site of N-myristoyl glycine; by host attachment. Residue serine 6 is modified to Phosphoserine; by host. The segment covering valine 16–glutamine 32 has biased composition (basic and acidic residues). The segment at glutamate 72–glutamate 75 is acidic; interacts with host PACS1 and PACS2; stabilizes the interaction of NEF/MHC-I with host AP1M1; necessary for MHC-I internalization. Residues proline 79 to proline 88 form an SH3-binding; interaction with Src family tyrosine kinases region. A PxxP; stabilizes the interaction of NEF/MHC-I with host AP1M1; necessary for MHC-I internalization motif is present at residues proline 82–proline 85. A mediates dimerization, Nef-PTE1 interaction region spans residues aspartate 118–tryptophan 134. The interval valine 158–valine 190 is binding to ATP6V1H. Residues leucine 174–leucine 175 carry the Dileucine internalization motif; necessary for CD4 internalization motif. The short motif at aspartate 184–aspartate 185 is the Diacidic; necessary for CD4 internalization element.

This sequence belongs to the lentivirus primate group Nef protein family. As to quaternary structure, monomer; cytosolic form. Homodimer; membrane bound form. Interacts with Nef associated p21-activated kinase (PAK2); this interaction activates PAK2. Associates with the Nef-MHC-I-AP1 complex; this complex is required for MHC-I internalization. Interacts (via C-terminus) with host PI3-kinase. Interacts with host PACS1; this interaction seems to be weak. Interacts with host PACS2. Interacts with host LCK and MAPK3; these interactions inhibit the kinase activity of the latter. Interacts with host ATP6V1H; this interaction may play a role in CD4 endocytosis. Associates with the CD4-Nef-AP2 complex; this complex is required for CD4 internalization. Interacts with host AP2 subunit alpha and AP2 subunit sigma2. Interacts with TCR-zeta chain; this interaction up-regulates the Fas ligand (FasL) surface expression. Interacts with host HCK, LYN, and SRC; these interactions activate the Src family kinases. Interacts with MAP3K5; this interaction inhibits the Fas and TNFR-mediated death signals. Interacts with beta-COP and PTE1. Interacts with human RACK1; this increases Nef phosphorylation by PKC. Interacts with TP53; this interaction decreases the half-life of TP53, protecting the infected cell against p53-mediated apoptosis. Post-translationally, the virion-associated Nef proteins are cleaved by the viral protease to release the soluble C-terminal core protein. Nef is probably cleaved concomitantly with viral structural proteins on maturation of virus particles. Myristoylated. In terms of processing, phosphorylated on serine residues, probably by host PKCdelta and theta.

The protein localises to the host cell membrane. It localises to the virion. It is found in the secreted. The protein resides in the host Golgi apparatus membrane. Functionally, factor of infectivity and pathogenicity, required for optimal virus replication. Alters numerous pathways of T-lymphocyte function and down-regulates immunity surface molecules in order to evade host defense and increase viral infectivity. Alters the functionality of other immunity cells, like dendritic cells, monocytes/macrophages and NK cells. In infected CD4(+) T-lymphocytes, down-regulates the surface MHC-I, mature MHC-II, CD4, CD28, CCR5 and CXCR4 molecules. Mediates internalization and degradation of host CD4 through the interaction of with the cytoplasmic tail of CD4, the recruitment of AP-2 (clathrin adapter protein complex 2), internalization through clathrin coated pits, and subsequent transport to endosomes and lysosomes for degradation. Diverts host MHC-I molecules to the trans-Golgi network-associated endosomal compartments by an endocytic pathway to finally target them for degradation. MHC-I down-regulation may involve AP-1 (clathrin adapter protein complex 1) or possibly Src family kinase-ZAP70/Syk-PI3K cascade recruited by PACS2. In consequence infected cells are masked for immune recognition by cytotoxic T-lymphocytes. Decreasing the number of immune receptors also prevents reinfection by more HIV particles (superinfection). Down-regulates host SERINC3 and SERINC5 thereby excluding these proteins from the viral particles. Virion infectivity is drastically higher when SERINC3 or SERINC5 are excluded from the viral envelope, because these host antiviral proteins impair the membrane fusion event necessary for subsequent virion penetration. In terms of biological role, bypasses host T-cell signaling by inducing a transcriptional program nearly identical to that of anti-CD3 cell activation. Interaction with TCR-zeta chain up-regulates the Fas ligand (FasL). Increasing surface FasL molecules and decreasing surface MHC-I molecules on infected CD4(+) cells send attacking cytotoxic CD8+ T-lymphocytes into apoptosis. Its function is as follows. Plays a role in optimizing the host cell environment for viral replication without causing cell death by apoptosis. Protects the infected cells from apoptosis in order to keep them alive until the next virus generation is ready to strike. Inhibits the Fas and TNFR-mediated death signals by blocking MAP3K5/ASK1. Decreases the half-life of TP53, protecting the infected cell against p53-mediated apoptosis. Inhibits the apoptotic signals regulated by the Bcl-2 family proteins through the formation of a Nef/PI3-kinase/PAK2 complex that leads to activation of PAK2 and induces phosphorylation of host BAD. Functionally, extracellular Nef protein targets CD4(+) T-lymphocytes for apoptosis by interacting with CXCR4 surface receptors. The chain is Protein Nef from Homo sapiens (Human).